Consider the following 229-residue polypeptide: Glutathione S-transferase 1 (229 aa).

The 82-residue stretch at 2 to 83 (SPVKVFGHPM…YILRKYGGTA (82 aa)) folds into the GST N-terminal domain. Residues 41-42 (HK), 54-55 (KM), and 67-68 (ES) contribute to the glutathione site. The GST C-terminal domain occupies 93 to 223 (GIEELAMVDV…RVCKHMPTEF (131 aa)).

Belongs to the GST superfamily. Phi family.

It catalyses the reaction RX + glutathione = an S-substituted glutathione + a halide anion + H(+). Functionally, conjugation of reduced glutathione to a wide number of exogenous and endogenous hydrophobic electrophiles. The sequence is that of Glutathione S-transferase 1 (GSTA1) from Triticum aestivum (Wheat).